A 161-amino-acid polypeptide reads, in one-letter code: SsrA-binding protein (161 aa).

The disordered stretch occupies residues 140–161 (KRESIKERDWKRDKQRLLKDRG).

This sequence belongs to the SmpB family.

Its subcellular location is the cytoplasm. Functionally, required for rescue of stalled ribosomes mediated by trans-translation. Binds to transfer-messenger RNA (tmRNA), required for stable association of tmRNA with ribosomes. tmRNA and SmpB together mimic tRNA shape, replacing the anticodon stem-loop with SmpB. tmRNA is encoded by the ssrA gene; the 2 termini fold to resemble tRNA(Ala) and it encodes a 'tag peptide', a short internal open reading frame. During trans-translation Ala-aminoacylated tmRNA acts like a tRNA, entering the A-site of stalled ribosomes, displacing the stalled mRNA. The ribosome then switches to translate the ORF on the tmRNA; the nascent peptide is terminated with the 'tag peptide' encoded by the tmRNA and targeted for degradation. The ribosome is freed to recommence translation, which seems to be the essential function of trans-translation. This Sphingopyxis alaskensis (strain DSM 13593 / LMG 18877 / RB2256) (Sphingomonas alaskensis) protein is SsrA-binding protein.